We begin with the raw amino-acid sequence, 225 residues long: Tryptophan synthase beta chain (225 aa).

Belongs to the TrpB family. As to quaternary structure, tetramer of two alpha and two beta chains. Pyridoxal 5'-phosphate is required as a cofactor.

It carries out the reaction (1S,2R)-1-C-(indol-3-yl)glycerol 3-phosphate + L-serine = D-glyceraldehyde 3-phosphate + L-tryptophan + H2O. The protein operates within amino-acid biosynthesis; L-tryptophan biosynthesis; L-tryptophan from chorismate: step 5/5. Functionally, the beta subunit is responsible for the synthesis of L-tryptophan from indole and L-serine. The chain is Tryptophan synthase beta chain (trpB) from Buchnera aphidicola subsp. Rhopalosiphum maidis.